The chain runs to 766 residues: AMP deaminase 3 (766 aa).

S85 and S107 each carry phosphoserine. Residues 89–114 (QMPTQQDWKGPPTASPAMSPATPLVP) are disordered. Residues 99 to 110 (PPTASPAMSPAT) are compositionally biased toward low complexity. H316 and H318 together coordinate Zn(2+). Residues H318 and 387–392 (KFNSKY) contribute to the substrate site. Zn(2+) is bound at residue H585. Residue E588 coordinates substrate. H607 serves as the catalytic Proton acceptor. D662 contacts Zn(2+). 663–666 (DPMQ) is a binding site for substrate.

It belongs to the metallo-dependent hydrolases superfamily. Adenosine and AMP deaminases family. Homotetramer. It depends on Zn(2+) as a cofactor. As to expression, found in heart, lung brain, spleen, kidney and to a lesser extent in liver.

The enzyme catalyses AMP + H2O + H(+) = IMP + NH4(+). It functions in the pathway purine metabolism; IMP biosynthesis via salvage pathway; IMP from AMP: step 1/1. In terms of biological role, AMP deaminase plays a critical role in energy metabolism. The polypeptide is AMP deaminase 3 (Mus musculus (Mouse)).